The primary structure comprises 514 residues: Endoglucanase MaCel5A (514 aa).

The N-terminal stretch at 1 to 23 is a signal peptide; sequence MKRILFTAGGCLFYLLLAVKAYA. Composition is skewed to low complexity over residues 91-114 and 179-201; these read GSSS…SGSG and SSSS…SSSG. Disordered stretches follow at residues 91 to 118 and 179 to 208; these read GSSS…SSSG and SSSS…GGDS. Catalysis depends on glutamate 346, which acts as the Proton donor. Glutamate 439 acts as the Nucleophile in catalysis.

The protein belongs to the glycosyl hydrolase 5 (cellulase A) family.

The catalysed reaction is Endohydrolysis of (1-&gt;4)-beta-D-glucosidic linkages in cellulose, lichenin and cereal beta-D-glucans.. Its activity is regulated as follows. Exhibits strong halostability and halotolerance. The activity increases about tenfold in the presence of 0.5 M NaCl, and about fivefold in the presence of 4.0 M NaCl. Tolerates detergents, but activity is decreased in the presence of EDTA. Activity is enhanced in the presence of Mn(2+), Ca(2+), Ba(2+) or Mg(2+), and decreased in the presence of Zn(2+), Cu(2+), Al(3+) or Fe(3+). Functionally, endoglucanase that exhibits highest activity toward barley beta-glucan, lower activity toward carboxymethyl cellulose (CMC-Na), and marginal activity toward laminarin and xylan. The polypeptide is Endoglucanase MaCel5A (Microbulbifer sp. (strain ALW1)).